Here is a 703-residue protein sequence, read N- to C-terminus: Protein O-mannosyl-transferase TMEM260 (703 aa).

Helical transmembrane passes span 20–40 (GALR…TLTL), 68–88 (PLFT…SVAY), 90–110 (VNLL…YTVF), 137–157 (IAAE…ALTV), 182–202 (SLCN…WILF), 218–238 (LTLA…SSYL), 314–334 (KSSV…FFAW), and 352–372 (FWLQ…ATLV). Residues asparagine 403 and asparagine 564 are each glycosylated (N-linked (GlcNAc...) asparagine).

Belongs to the glycosyltransferase 117 (GT117) family.

The protein localises to the endoplasmic reticulum membrane. It catalyses the reaction a di-trans,poly-cis-dolichyl beta-D-mannosyl phosphate + L-seryl-[protein] = 3-O-(alpha-D-mannosyl)-L-seryl-[protein] + a di-trans,poly-cis-dolichyl phosphate + H(+). It carries out the reaction a di-trans,poly-cis-dolichyl beta-D-mannosyl phosphate + L-threonyl-[protein] = 3-O-(alpha-D-mannosyl)-L-threonyl-[protein] + a di-trans,poly-cis-dolichyl phosphate + H(+). In terms of biological role, O-mannosyl-transferase that transfers mannosyl residues to the hydroxyl group of serine or threonine residues of proteins. Specifically glycosylates the IPT/TIG domain of target proteins, such as MET and MST1R/RON. TMEM260-mediated O-mannosylated residues are composed of single mannose glycans that are not elongated or modified. This is Protein O-mannosyl-transferase TMEM260 from Mus musculus (Mouse).